The chain runs to 1407 residues: DNA-directed RNA polymerase subunit beta' (1407 aa).

Zn(2+) contacts are provided by Cys-70, Cys-72, Cys-85, and Cys-88. Mg(2+)-binding residues include Asp-460, Asp-462, and Asp-464. Residues Cys-814, Cys-888, Cys-895, and Cys-898 each contribute to the Zn(2+) site.

This sequence belongs to the RNA polymerase beta' chain family. The RNAP catalytic core consists of 2 alpha, 1 beta, 1 beta' and 1 omega subunit. When a sigma factor is associated with the core the holoenzyme is formed, which can initiate transcription. Mg(2+) serves as cofactor. The cofactor is Zn(2+).

The enzyme catalyses RNA(n) + a ribonucleoside 5'-triphosphate = RNA(n+1) + diphosphate. In terms of biological role, DNA-dependent RNA polymerase catalyzes the transcription of DNA into RNA using the four ribonucleoside triphosphates as substrates. This chain is DNA-directed RNA polymerase subunit beta', found in Citrobacter koseri (strain ATCC BAA-895 / CDC 4225-83 / SGSC4696).